We begin with the raw amino-acid sequence, 420 residues long: Glutamyl-tRNA reductase (420 aa).

Residues 49 to 52 (TCNR), Ser-107, 112 to 114 (EPQ), and Gln-118 each bind substrate. The active-site Nucleophile is the Cys-50. An NADP(+)-binding site is contributed by 187–192 (GAGETI).

This sequence belongs to the glutamyl-tRNA reductase family. Homodimer.

The enzyme catalyses (S)-4-amino-5-oxopentanoate + tRNA(Glu) + NADP(+) = L-glutamyl-tRNA(Glu) + NADPH + H(+). The protein operates within porphyrin-containing compound metabolism; protoporphyrin-IX biosynthesis; 5-aminolevulinate from L-glutamyl-tRNA(Glu): step 1/2. Functionally, catalyzes the NADPH-dependent reduction of glutamyl-tRNA(Glu) to glutamate 1-semialdehyde (GSA). The sequence is that of Glutamyl-tRNA reductase from Nitrosococcus oceani (strain ATCC 19707 / BCRC 17464 / JCM 30415 / NCIMB 11848 / C-107).